The sequence spans 524 residues: Leucine-rich repeat-containing protein 1 (524 aa).

LRR repeat units lie at residues 11 to 34, 35 to 58, 60 to 81, 83 to 105, 107 to 126, 127 to 149, 150 to 172, 173 to 196, 198 to 218, 219 to 242, 244 to 264, 265 to 288, 290 to 310, 311 to 334, 336 to 356, 357 to 380, and 382 to 405; these read NRHV…IYRY, ARSL…FFQL, KLRK…IANF, QLVE…AFCK, LQVA…SFPE, LQNL…NIGN, LYNL…SLTQ, LRRL…IGAL, HLKD…EIGN, LKNL…ISGL, SLTY…GIGK, LKKL…IGDC, NLTE…SIGK, LKKL…IGGC, SLTM…EVSQ, AVEL…LTTL, and LKAL…IDRA. Residues 456 to 512 adopt a coiled-coil conformation; the sequence is SAIRFLEDEKDEDENETRTLQRRATPHPGELKNMKKTVENLRNDMNAAKGLDSNKNE. Residues 464 to 485 form a disordered region; that stretch reads EKDEDENETRTLQRRATPHPGE. The residue at position 480 (threonine 480) is a Phosphothreonine.

Interacts with DLG1. May form a complex with DLG1 and ERBIN, where interaction between LRRC1 and ERBIN is indirect.

The protein resides in the cytoplasm. Its subcellular location is the membrane. The protein is Leucine-rich repeat-containing protein 1 (Lrrc1) of Mus musculus (Mouse).